Consider the following 457-residue polypeptide: Acetylcholine receptor subunit alpha (457 aa).

The signal sequence occupies residues Met1–Gly20. The Extracellular portion of the chain corresponds to Ser21–Leu230. Intrachain disulfides connect Cys148-Cys162 and Cys212-Cys213. N-linked (GlcNAc...) asparagine glycosylation is present at Asn161. The next 3 helical transmembrane spans lie at Pro231–Leu255, Met263–Val281, and Tyr297–Ile316. Topologically, residues Asn317 to His428 are cytoplasmic. A helical membrane pass occupies residues Ile429–Ala447.

Belongs to the ligand-gated ion channel (TC 1.A.9) family. Acetylcholine receptor (TC 1.A.9.1) subfamily. Alpha-1/CHRNA1 sub-subfamily. In terms of assembly, one of the alpha chains that assemble within the acetylcholine receptor, a pentamer of two alpha chains, a beta, a delta, and a gamma (in immature muscle) or epsilon (in mature muscle) chains. The muscle heteropentamer composed of alpha-1, beta-1, delta, epsilon subunits interacts with the alpha-conotoxin ImII.

It is found in the postsynaptic cell membrane. The protein localises to the cell membrane. It catalyses the reaction K(+)(in) = K(+)(out). The enzyme catalyses Na(+)(in) = Na(+)(out). Upon acetylcholine binding, the AChR responds by an extensive change in conformation that affects all subunits and leads to opening of an ion-conducting channel across the plasma membrane. The sequence is that of Acetylcholine receptor subunit alpha (Chrna1) from Rattus norvegicus (Rat).